The primary structure comprises 70 residues: Putative membrane protein insertion efficiency factor (70 aa).

It belongs to the UPF0161 family.

It localises to the cell inner membrane. Functionally, could be involved in insertion of integral membrane proteins into the membrane. The sequence is that of Putative membrane protein insertion efficiency factor from Desulforapulum autotrophicum (strain ATCC 43914 / DSM 3382 / VKM B-1955 / HRM2) (Desulfobacterium autotrophicum).